Consider the following 417-residue polypeptide: Ribonucleoside-diphosphate reductase small chain (417 aa).

Fe cation-binding residues include D168, E199, and H202. Y206 is an active-site residue. Positions 261, 297, and 300 each coordinate Fe cation.

It belongs to the ribonucleoside diphosphate reductase small chain family. In terms of assembly, heterotetramer composed of a homodimer of the large subunit (R1) and a homodimer of the small subunit (R2). Larger multisubunit protein complex are also active, composed of (R1)n(R2)n. Requires Fe cation as cofactor.

The enzyme catalyses a 2'-deoxyribonucleoside 5'-diphosphate + [thioredoxin]-disulfide + H2O = a ribonucleoside 5'-diphosphate + [thioredoxin]-dithiol. Functionally, ribonucleoside-diphosphate reductase holoenzyme provides the precursors necessary for viral DNA synthesis. Allows virus growth in non-dividing cells. Catalyzes the biosynthesis of deoxyribonucleotides from the corresponding ribonucleotides. The chain is Ribonucleoside-diphosphate reductase small chain (RNR2) from Acanthamoeba polyphaga mimivirus (APMV).